The primary structure comprises 199 residues: Imidazole glycerol phosphate synthase subunit HisH (199 aa).

A Glutamine amidotransferase type-1 domain is found at 1–199 (MTVVVDYEMG…QILKNLREML (199 aa)). The active-site Nucleophile is Cys-79. Catalysis depends on residues His-180 and Glu-182.

In terms of assembly, heterodimer of HisH and HisF.

The protein localises to the cytoplasm. It carries out the reaction 5-[(5-phospho-1-deoxy-D-ribulos-1-ylimino)methylamino]-1-(5-phospho-beta-D-ribosyl)imidazole-4-carboxamide + L-glutamine = D-erythro-1-(imidazol-4-yl)glycerol 3-phosphate + 5-amino-1-(5-phospho-beta-D-ribosyl)imidazole-4-carboxamide + L-glutamate + H(+). The catalysed reaction is L-glutamine + H2O = L-glutamate + NH4(+). The protein operates within amino-acid biosynthesis; L-histidine biosynthesis; L-histidine from 5-phospho-alpha-D-ribose 1-diphosphate: step 5/9. In terms of biological role, IGPS catalyzes the conversion of PRFAR and glutamine to IGP, AICAR and glutamate. The HisH subunit catalyzes the hydrolysis of glutamine to glutamate and ammonia as part of the synthesis of IGP and AICAR. The resulting ammonia molecule is channeled to the active site of HisF. The protein is Imidazole glycerol phosphate synthase subunit HisH of Carboxydothermus hydrogenoformans (strain ATCC BAA-161 / DSM 6008 / Z-2901).